Reading from the N-terminus, the 248-residue chain is 14-3-3 protein homolog 2 (248 aa).

Belongs to the 14-3-3 family.

The chain is 14-3-3 protein homolog 2 from Echinococcus granulosus (Hydatid tapeworm).